Here is a 155-residue protein sequence, read N- to C-terminus: MPAPTIYVDADACPVKAEVEKVAERLGVVVTYVSNGGLRPSRDPMIRNVVVSKGADAADDWIVENAKSNDVVVTADIPLAARAVALGAHVLGPTGRPFTPETIGMAVAMRDLKQHLRETGESKGYNASFAPQDRSRFLGELDRILRRALKSATPG.

The protein belongs to the UPF0178 family.

This is UPF0178 protein mlr0875 from Mesorhizobium japonicum (strain LMG 29417 / CECT 9101 / MAFF 303099) (Mesorhizobium loti (strain MAFF 303099)).